The primary structure comprises 83 residues: UPF0147 protein TK2131 (83 aa).

Belongs to the UPF0147 family.

This chain is UPF0147 protein TK2131, found in Thermococcus kodakarensis (strain ATCC BAA-918 / JCM 12380 / KOD1) (Pyrococcus kodakaraensis (strain KOD1)).